We begin with the raw amino-acid sequence, 719 residues long: Polyribonucleotide nucleotidyltransferase (719 aa).

2 residues coordinate Mg(2+): aspartate 507 and aspartate 513. A KH domain is found at 573-633; it reads PKLELFSVDP…EQIKAAKDYI (61 aa). In terms of domain architecture, S1 motif spans 658–719; that stretch reads GQEFQGIVKK…NGKISVDLCE (62 aa).

It belongs to the polyribonucleotide nucleotidyltransferase family. Requires Mg(2+) as cofactor.

The protein localises to the cytoplasm. It carries out the reaction RNA(n+1) + phosphate = RNA(n) + a ribonucleoside 5'-diphosphate. Involved in mRNA degradation. Catalyzes the phosphorolysis of single-stranded polyribonucleotides processively in the 3'- to 5'-direction. This is Polyribonucleotide nucleotidyltransferase from Campylobacter jejuni subsp. jejuni serotype O:2 (strain ATCC 700819 / NCTC 11168).